The chain runs to 299 residues: Inosose dehydratase (299 aa).

The protein belongs to the IolE/MocC family. Glutathione serves as cofactor. The cofactor is Co(2+). It depends on Mn(2+) as a cofactor.

It catalyses the reaction scyllo-inosose = 3D-3,5/4-trihydroxycyclohexane-1,2-dione + H2O. Its function is as follows. Catalyzes the dehydration of inosose (2-keto-myo-inositol, 2KMI or 2,4,6/3,5-pentahydroxycyclohexanone) to 3D-(3,5/4)-trihydroxycyclohexane-1,2-dione (D-2,3-diketo-4-deoxy-epi-inositol). The sequence is that of Inosose dehydratase from Klebsiella pneumoniae (strain 342).